A 474-amino-acid chain; its full sequence is tRNA (adenine(58)-N(1))-methyltransferase catalytic subunit trm61 (474 aa).

Positions 75–109 (DTGSRGRTQKMKRKADELDSSTQAEDKPSPQTPVA) are disordered. Residues 163 to 165 (SGS), Glu-197, Arg-202, 225 to 226 (DV), and Asp-250 contribute to the S-adenosyl-L-methionine site. Disordered stretches follow at residues 356–390 (LFRA…VPVY) and 423–474 (DEKR…SQKE). Residues 358-367 (RATQNQSDGD) show a composition bias toward polar residues. Residues 423-432 (DEKRCREKWP) are compositionally biased toward basic and acidic residues. Polar residues predominate over residues 434-443 (NRVQEPQGPQ). A compositionally biased stretch (basic and acidic residues) spans 450–474 (KRESREKRDLQRKEQSQPETESQKE).

The protein belongs to the class I-like SAM-binding methyltransferase superfamily. TRM61 family. In terms of assembly, heterotetramer; composed of two copies of TRM6 and two copies of TRM61.

The protein localises to the nucleus. It carries out the reaction adenosine(58) in tRNA + S-adenosyl-L-methionine = N(1)-methyladenosine(58) in tRNA + S-adenosyl-L-homocysteine + H(+). Functionally, catalytic subunit of tRNA (adenine-N(1)-)-methyltransferase, which catalyzes the formation of N(1)-methyladenine at position 58 (m1A58) in initiator methionyl-tRNA. This Aspergillus oryzae (strain ATCC 42149 / RIB 40) (Yellow koji mold) protein is tRNA (adenine(58)-N(1))-methyltransferase catalytic subunit trm61 (trm61).